Here is a 333-residue protein sequence, read N- to C-terminus: Protein XAP5 CIRCADIAN TIMEKEEPER (333 aa).

2 coiled-coil regions span residues 12 to 43 (AQDA…SDGQ) and 70 to 116 (TREQ…VRGD). Positions 89 to 98 (EKEKLQKLQQ) are enriched in basic and acidic residues. Residues 89-171 (EKEKLQKLQQ…REREAEEQAE (83 aa)) form a disordered region. Residues 123-136 (DEIENGSDEDEFEN) are compositionally biased toward acidic residues. The span at 160–171 (PDREREAEEQAE) shows a compositional bias: basic and acidic residues.

It belongs to the FAM50 family.

The protein resides in the nucleus. Functionally, involved in light regulation of the circadian clock and photomorphogenesis. The sequence is that of Protein XAP5 CIRCADIAN TIMEKEEPER (XCT) from Oryza sativa subsp. indica (Rice).